A 397-amino-acid polypeptide reads, in one-letter code: N-acetyllactosaminide beta-1,3-N-acetylglucosaminyltransferase 2 (397 aa).

Residues 1-7 (MSVGRRR) lie on the Cytoplasmic side of the membrane. The chain crosses the membrane as a helical; Signal-anchor for type II membrane protein span at residues 8 to 28 (VKLLGILMMANVFIYLIVEVS). Topologically, residues 29-325 (KNSSQDKNGK…ALRLYSATSR (297 aa)) are lumenal. N-linked (GlcNAc...) asparagine glycosylation is found at Asn30, Asn79, Asn89, Asn127, Asn173, and Asn219.

This sequence belongs to the glycosyltransferase 31 family. In terms of assembly, interacts with B3GNT8; this interaction greatly increases B3GNT2 catalytic activity, independently of B3GNT8 enzymatic activity. Mn(2+) is required as a cofactor. As to expression, expressed in heart, brain, lung, kidney and testis and, to a lesser extent, in liver and skeletal muscle. No expression in spleen.

It is found in the golgi apparatus membrane. The enzyme catalyses a beta-D-galactosyl-(1-&gt;4)-N-acetyl-beta-D-glucosaminyl derivative + UDP-N-acetyl-alpha-D-glucosamine = an N-acetyl-beta-D-glucosaminyl-(1-&gt;3)-beta-D-galactosyl-(1-&gt;4)-N-acetyl-beta-D-glucosaminyl derivative + UDP + H(+). It participates in protein modification; protein glycosylation. Its function is as follows. Beta-1,3-N-acetylglucosaminyltransferase involved in the synthesis of poly-N-acetyllactosamine. Catalyzes the initiation and elongation of poly-N-acetyllactosamine chains. Probably constitutes the main polylactosamine synthase. This Mus musculus (Mouse) protein is N-acetyllactosaminide beta-1,3-N-acetylglucosaminyltransferase 2 (B3GNT2).